The sequence spans 430 residues: Threonine synthase (430 aa).

N6-(pyridoxal phosphate)lysine is present on Lys108.

It belongs to the threonine synthase family. Pyridoxal 5'-phosphate serves as cofactor.

The catalysed reaction is O-phospho-L-homoserine + H2O = L-threonine + phosphate. It functions in the pathway amino-acid biosynthesis; L-threonine biosynthesis; L-threonine from L-aspartate: step 5/5. Its function is as follows. Catalyzes the gamma-elimination of phosphate from L-phosphohomoserine and the beta-addition of water to produce L-threonine. This chain is Threonine synthase (thrC), found in Buchnera aphidicola subsp. Baizongia pistaciae (strain Bp).